A 311-amino-acid chain; its full sequence is ATP synthase gamma chain (311 aa).

The protein belongs to the ATPase gamma chain family. In terms of assembly, F-type ATPases have 2 components, CF(1) - the catalytic core - and CF(0) - the membrane proton channel. CF(1) has five subunits: alpha(3), beta(3), gamma(1), delta(1), epsilon(1). CF(0) has three main subunits: a, b and c.

Its subcellular location is the cell membrane. Produces ATP from ADP in the presence of a proton gradient across the membrane. The gamma chain is believed to be important in regulating ATPase activity and the flow of protons through the CF(0) complex. This Limosilactobacillus fermentum (strain NBRC 3956 / LMG 18251) (Lactobacillus fermentum) protein is ATP synthase gamma chain.